The chain runs to 278 residues: MTMESYKTLEIIRKNTDSSVFHLIINRPSHLNALSLDFFIEFPKALSSLDQNPDVSVIILSGAGKHFCSGIDLNSLSSISTQSSSGNDRGRSSEQLRRKIKSMQAAITAIEQCRKPVIAAIHGACIGGGVDLITACDIRYCSEDAFFSIKEVDLAIVADLGTLQRLPSIVGYANAMELALTARRFSGSEAKDLGLVSKVFGSKSELDNGVTTIAEGIGGKSPLAVTGTKAVLLRSREVSVEQGLDYVATWNSAMLISDDLNEAVSAQMMKRKPRFAKL.

Methionine 1 carries the N-acetylmethionine modification. Substrate is bound by residues 69–73 (SGIDL) and glycine 128. Residues 276–278 (AKL) carry the Microbody targeting signal motif.

This sequence belongs to the enoyl-CoA hydratase/isomerase family. Expressed in roots, leaves, stems and flowers.

It localises to the peroxisome. The catalysed reaction is a (3E,5Z)-dienoyl-CoA = a (2E,4E)-(5,6-saturated)-dienoyl-CoA. It functions in the pathway lipid metabolism; fatty acid beta-oxidation. Converts 3,5-dienoyl-CoAs to the corresponding 2,4-dienoyl-CoAs. Involved in degradation of unsaturated fatty acids. The chain is Delta(3,5)-Delta(2,4)-dienoyl-CoA isomerase, peroxisomal from Arabidopsis thaliana (Mouse-ear cress).